A 244-amino-acid chain; its full sequence is 1-(5-phosphoribosyl)-5-[(5-phosphoribosylamino)methylideneamino] imidazole-4-carboxamide isomerase (244 aa).

The active-site Proton acceptor is Asp8. The Proton donor role is filled by Asp130.

This sequence belongs to the HisA/HisF family.

The protein resides in the cytoplasm. It carries out the reaction 1-(5-phospho-beta-D-ribosyl)-5-[(5-phospho-beta-D-ribosylamino)methylideneamino]imidazole-4-carboxamide = 5-[(5-phospho-1-deoxy-D-ribulos-1-ylimino)methylamino]-1-(5-phospho-beta-D-ribosyl)imidazole-4-carboxamide. It functions in the pathway amino-acid biosynthesis; L-histidine biosynthesis; L-histidine from 5-phospho-alpha-D-ribose 1-diphosphate: step 4/9. This Syntrophomonas wolfei subsp. wolfei (strain DSM 2245B / Goettingen) protein is 1-(5-phosphoribosyl)-5-[(5-phosphoribosylamino)methylideneamino] imidazole-4-carboxamide isomerase.